The following is a 316-amino-acid chain: tRNA dimethylallyltransferase (316 aa).

Position 17–24 (17–24 (GPTASGKT)) interacts with ATP. A substrate-binding site is contributed by 19–24 (TASGKT). Interaction with substrate tRNA stretches follow at residues 42-45 (DSAL), 166-170 (QRLSR), 247-252 (RCVGYR), and 280-287 (KRQITWLR).

This sequence belongs to the IPP transferase family. Monomer. Mg(2+) serves as cofactor.

The catalysed reaction is adenosine(37) in tRNA + dimethylallyl diphosphate = N(6)-dimethylallyladenosine(37) in tRNA + diphosphate. Catalyzes the transfer of a dimethylallyl group onto the adenine at position 37 in tRNAs that read codons beginning with uridine, leading to the formation of N6-(dimethylallyl)adenosine (i(6)A). This is tRNA dimethylallyltransferase from Shigella boydii serotype 18 (strain CDC 3083-94 / BS512).